The chain runs to 81 residues: Small ribosomal subunit protein bS16 (81 aa).

This sequence belongs to the bacterial ribosomal protein bS16 family.

In Lachnoclostridium phytofermentans (strain ATCC 700394 / DSM 18823 / ISDg) (Clostridium phytofermentans), this protein is Small ribosomal subunit protein bS16.